The primary structure comprises 858 residues: Leucine--tRNA ligase (858 aa).

Positions 42 to 52 (PYPSGRLHMGH) match the 'HIGH' region motif. Residues 618–622 (KMSKS) carry the 'KMSKS' region motif. K621 contacts ATP.

This sequence belongs to the class-I aminoacyl-tRNA synthetase family.

Its subcellular location is the cytoplasm. The catalysed reaction is tRNA(Leu) + L-leucine + ATP = L-leucyl-tRNA(Leu) + AMP + diphosphate. The protein is Leucine--tRNA ligase of Vibrio cholerae serotype O1 (strain ATCC 39541 / Classical Ogawa 395 / O395).